The primary structure comprises 83 residues: Urotensin-2 (83 aa).

The propeptide occupies 49–71; sequence EVLLEKQSLLNPFSRVFGIRKQF. Cysteines 77 and 82 form a disulfide.

The protein belongs to the urotensin-2 family.

It is found in the secreted. Functionally, urotensin is found in the teleost caudal neurosecretory system. It has a suggested role in osmoregulation and as a corticotropin-releasing factor. The non-hormonal portion of this precursor may be a urotensin binding protein, urophysin. This chain is Urotensin-2, found in Platichthys flesus (European flounder).